Consider the following 103-residue polypeptide: Large ribosomal subunit protein bL21 (103 aa).

Belongs to the bacterial ribosomal protein bL21 family. Part of the 50S ribosomal subunit. Contacts protein L20.

Functionally, this protein binds to 23S rRNA in the presence of protein L20. This Delftia acidovorans (strain DSM 14801 / SPH-1) protein is Large ribosomal subunit protein bL21.